Here is a 92-residue protein sequence, read N- to C-terminus: Small ribosomal subunit protein uS19 (92 aa).

It belongs to the universal ribosomal protein uS19 family.

In terms of biological role, protein S19 forms a complex with S13 that binds strongly to the 16S ribosomal RNA. This is Small ribosomal subunit protein uS19 from Prochlorococcus marinus (strain MIT 9301).